We begin with the raw amino-acid sequence, 349 residues long: Isopentenyl-diphosphate delta-isomerase (349 aa).

Substrate is bound at residue R6–K7. Residues A62–T64, S93, and N122 each bind FMN. Q152 is a binding site for substrate. E153 contributes to the Mg(2+) binding site. Residues K184, T214, G258–G259, and A280–G281 contribute to the FMN site.

It belongs to the IPP isomerase type 2 family. In terms of assembly, homooctamer. Dimer of tetramers. Requires FMN as cofactor. NADPH is required as a cofactor. It depends on Mg(2+) as a cofactor.

It is found in the cytoplasm. It carries out the reaction isopentenyl diphosphate = dimethylallyl diphosphate. Functionally, involved in the biosynthesis of isoprenoids. Catalyzes the 1,3-allylic rearrangement of the homoallylic substrate isopentenyl (IPP) to its allylic isomer, dimethylallyl diphosphate (DMAPP). The chain is Isopentenyl-diphosphate delta-isomerase from Bacillus anthracis (strain A0248).